We begin with the raw amino-acid sequence, 443 residues long: 3-phosphoshikimate 1-carboxyvinyltransferase (443 aa).

Positions 1 to 22 are disordered; the sequence is MSHASRPTPLEARGSTPLTGRV. 3-phosphoshikimate is bound by residues K28, S29, and R33. K28 is a phosphoenolpyruvate binding site. 2 residues coordinate phosphoenolpyruvate: G101 and R129. The 3-phosphoshikimate site is built by S174, Q176, D326, and K353. Q176 is a phosphoenolpyruvate binding site. D326 functions as the Proton acceptor in the catalytic mechanism. Residues R357 and R400 each contribute to the phosphoenolpyruvate site.

This sequence belongs to the EPSP synthase family. Monomer.

The protein localises to the cytoplasm. The enzyme catalyses 3-phosphoshikimate + phosphoenolpyruvate = 5-O-(1-carboxyvinyl)-3-phosphoshikimate + phosphate. It functions in the pathway metabolic intermediate biosynthesis; chorismate biosynthesis; chorismate from D-erythrose 4-phosphate and phosphoenolpyruvate: step 6/7. Catalyzes the transfer of the enolpyruvyl moiety of phosphoenolpyruvate (PEP) to the 5-hydroxyl of shikimate-3-phosphate (S3P) to produce enolpyruvyl shikimate-3-phosphate and inorganic phosphate. The polypeptide is 3-phosphoshikimate 1-carboxyvinyltransferase (Afipia carboxidovorans (strain ATCC 49405 / DSM 1227 / KCTC 32145 / OM5) (Oligotropha carboxidovorans)).